We begin with the raw amino-acid sequence, 44 residues long: Conotoxin S5.1 (44 aa).

Post-translationally, contains 3 disulfide bonds. In terms of tissue distribution, expressed by the venom duct.

Its subcellular location is the secreted. This Conus striatus (Striated cone) protein is Conotoxin S5.1.